Consider the following 213-residue polypeptide: Thiamine-phosphate synthase (213 aa).

Residues Gln42–Lys46 and Asp77 each bind 4-amino-2-methyl-5-(diphosphooxymethyl)pyrimidine. The Mg(2+) site is built by Asp78 and Asp97. Ser116 lines the 4-amino-2-methyl-5-(diphosphooxymethyl)pyrimidine pocket. Position 142–144 (Thr142–Ser144) interacts with 2-[(2R,5Z)-2-carboxy-4-methylthiazol-5(2H)-ylidene]ethyl phosphate. Lys145 contacts 4-amino-2-methyl-5-(diphosphooxymethyl)pyrimidine. 2-[(2R,5Z)-2-carboxy-4-methylthiazol-5(2H)-ylidene]ethyl phosphate-binding positions include Gly173 and Ile193–Ser194.

Belongs to the thiamine-phosphate synthase family. Mg(2+) is required as a cofactor.

It catalyses the reaction 2-[(2R,5Z)-2-carboxy-4-methylthiazol-5(2H)-ylidene]ethyl phosphate + 4-amino-2-methyl-5-(diphosphooxymethyl)pyrimidine + 2 H(+) = thiamine phosphate + CO2 + diphosphate. The catalysed reaction is 2-(2-carboxy-4-methylthiazol-5-yl)ethyl phosphate + 4-amino-2-methyl-5-(diphosphooxymethyl)pyrimidine + 2 H(+) = thiamine phosphate + CO2 + diphosphate. The enzyme catalyses 4-methyl-5-(2-phosphooxyethyl)-thiazole + 4-amino-2-methyl-5-(diphosphooxymethyl)pyrimidine + H(+) = thiamine phosphate + diphosphate. It participates in cofactor biosynthesis; thiamine diphosphate biosynthesis; thiamine phosphate from 4-amino-2-methyl-5-diphosphomethylpyrimidine and 4-methyl-5-(2-phosphoethyl)-thiazole: step 1/1. Condenses 4-methyl-5-(beta-hydroxyethyl)thiazole monophosphate (THZ-P) and 2-methyl-4-amino-5-hydroxymethyl pyrimidine pyrophosphate (HMP-PP) to form thiamine monophosphate (TMP). This chain is Thiamine-phosphate synthase, found in Limosilactobacillus fermentum (strain NBRC 3956 / LMG 18251) (Lactobacillus fermentum).